We begin with the raw amino-acid sequence, 336 residues long: Formimidoylglutamase (336 aa).

The span at 1 to 10 (MNPNFTTEHT) shows a compositional bias: polar residues. The segment at 1–22 (MNPNFTTEHTWQGRHDPEDGQA) is disordered. A compositionally biased stretch (basic and acidic residues) spans 11–22 (WQGRHDPEDGQA). Mn(2+) contacts are provided by histidine 127, aspartate 157, histidine 159, aspartate 161, aspartate 254, and aspartate 256.

This sequence belongs to the arginase family. Mn(2+) is required as a cofactor.

It carries out the reaction N-formimidoyl-L-glutamate + H2O = formamide + L-glutamate. Its pathway is amino-acid degradation; L-histidine degradation into L-glutamate; L-glutamate from N-formimidoyl-L-glutamate (hydrolase route): step 1/1. Functionally, catalyzes the conversion of N-formimidoyl-L-glutamate to L-glutamate and formamide. The chain is Formimidoylglutamase from Vibrio cholerae serotype O1 (strain ATCC 39541 / Classical Ogawa 395 / O395).